The sequence spans 740 residues: D-ornithine 4,5-aminomutase subunit beta (740 aa).

Residues E81, Y160, H182, and 294–296 (RAQ) each bind substrate. The region spanning 602 to 739 (PLKIVAATVG…VKKRREMREG (138 aa)) is the B12-binding domain. Adenosylcob(III)alamin is bound by residues 614–616 (EHS) and H615. At K626 the chain carries N6-(pyridoxal phosphate)lysine. Residues 664 to 669 (STIISH), T700, and S720 each bind adenosylcob(III)alamin.

Heterotetramer of 2 alpha (OraS) and 2 beta (OraE) subunits. Adenosylcob(III)alamin serves as cofactor. The cofactor is pyridoxal 5'-phosphate.

It carries out the reaction D-ornithine = (2R,4S)-2,4-diaminopentanoate. Increased activity in the presence of dithiothreitol (DTT) in vitro. Inhibited by 1 mM potassium phosphate and potassium chloride. Inhibited by L-alpha-ornithine, D,L-alpha-lysine, L-beta-lysine (50%-60%), L-alpha-lysine (26%) and by delta-amino-n-valeric acid to a lesser extent. Significant decrease in activity is observed in the presence of 0.2 mM p-chloromercuribenzoate, N-ethylmaleimide and also by 2 mM iodoacetate to a lesser extent but not inhibited by arsenite. Functionally, component of a complex that catalyzes the reversible migration of the omega amino group of D-ornithine to C-4 to form (2R,4S)-2,4-diaminopentanoic acid. OraE may be the catalytic subunit. Active only on D-ornithine and 2,4-diaminopentanoic acid but not active on L-ornithine, L-beta-lysine, L-alpha-lysine or D-alpha-lysine. This Acetoanaerobium sticklandii (strain ATCC 12662 / DSM 519 / JCM 1433 / CCUG 9281 / NCIMB 10654 / HF) (Clostridium sticklandii) protein is D-ornithine 4,5-aminomutase subunit beta (oraE).